Here is a 300-residue protein sequence, read N- to C-terminus: Junctional adhesion molecule A (300 aa).

A signal peptide spans 1–26; sequence MGTEGKAGSKLLFLFTSMILGSLVQG. The Extracellular portion of the chain corresponds to 27–238; that stretch reads KGSVYSPQTA…MEAVELNVGG (212 aa). 2 Ig-like V-type domains span residues 28–122 and 134–228; these read GSVY…GEVS and PTVS…EAVR. 2 disulfides stabilise this stretch: cysteine 49–cysteine 108 and cysteine 152–cysteine 212. Asparagine 185 is a glycosylation site (N-linked (GlcNAc...) asparagine). Residues 239-259 traverse the membrane as a helical segment; it reads IVAAVLVTLILLGLLIFGIWF. Residues 260–300 are Cytoplasmic-facing; sequence AYSRGYFERTKKGTAPGKKVIYSQPSARSEGEFKQTSSFLV. A phosphoserine mark is found at serine 282, serine 285, and serine 288.

Belongs to the immunoglobulin superfamily. In terms of assembly, interacts with the ninth PDZ domain of MPDZ. Interacts with the first PDZ domain of PARD3. The association between PARD3 and PARD6B probably disrupts this interaction. Interacts with ITGAL (via I-domain). Interacts with CD151. N-glycosylated.

It localises to the cell junction. Its subcellular location is the tight junction. The protein localises to the cell membrane. Seems to play a role in epithelial tight junction formation. Appears early in primordial forms of cell junctions and recruits PARD3. The association of the PARD6-PARD3 complex may prevent the interaction of PARD3 with JAM1, thereby preventing tight junction assembly. Plays a role in regulating monocyte transmigration involved in integrity of epithelial barrier. Ligand for integrin alpha-L/beta-2 involved in memory T-cell and neutrophil transmigration. In Rattus norvegicus (Rat), this protein is Junctional adhesion molecule A (F11r).